Here is a 218-residue protein sequence, read N- to C-terminus: MPMILGYWNVRGLTNPIRLLLEYTDSSYEEKKYTMGDAPDSDRSQWLNEKFKLGLDFPNLPYLIDGSHKITQSNAILRYIARKHNLCGETEEERIRVDIVENQAMDTRMQLIMLCYNPDFEKQKPEFLKTIPEKMKMYSEFLGKRPWFAGDKVTLCGFLAYDVLDQYQMFEPKCLDPFPNLKDFLARFEGLKKISAYMKTSRFLRRPIFSKMAQWSNK.

One can recognise a GST N-terminal domain in the interval 2-88 (PMILGYWNVR…YIARKHNLCG (87 aa)). Glutathione-binding positions include 7-8 (YW), 46-50 (WLNEK), 59-60 (NL), and 72-73 (QS). Residues 90–208 (TEEERIRVDI…KTSRFLRRPI (119 aa)) enclose the GST C-terminal domain. Residue Tyr116 participates in substrate binding.

Belongs to the GST superfamily. Mu family. Homodimer.

It is found in the cytoplasm. It carries out the reaction RX + glutathione = an S-substituted glutathione + a halide anion + H(+). Its function is as follows. Conjugation of reduced glutathione to a wide number of exogenous and endogenous hydrophobic electrophiles. In Cricetulus longicaudatus (Long-tailed dwarf hamster), this protein is Glutathione S-transferase Y1.